Here is a 399-residue protein sequence, read N- to C-terminus: MTRYSQPDALGQYGIYGGRYIPETLMQAVLELEQAYAEVKEDPAFRERMNDLLENYVGRQTPLYYAEHLTRTIGGAKIYLKREDLNHTGAHKINNTIGQALLAERMGKRKIVAETGAGQHGVATATVCALLDLECVIFMGEEDIRRQELNVFRMELLGAKVVSVTQGSRTLKDAVNEALRYWVKHVDDTHYLMGSVLGPHPFPEIVRDFQAVIGQETRTQILEKEGKLPEAIVACVGGGSNAIGMFHPFIDDEEVALYGIEAAGSGLETEKHAATMSKGEVGVLHGSMMYLLQDEHGQVTEAHSISAGLDYPGVGPEHSLLKDIGRVQYEAVTDQQALDALQLLCQKEGIIPALESAHAVAHAKELARGMQPEEVVVICLSGRGDKDVMTVRNALKGEA.

At lysine 92 the chain carries N6-(pyridoxal phosphate)lysine.

Belongs to the TrpB family. In terms of assembly, tetramer of two alpha and two beta chains. Pyridoxal 5'-phosphate is required as a cofactor.

It catalyses the reaction (1S,2R)-1-C-(indol-3-yl)glycerol 3-phosphate + L-serine = D-glyceraldehyde 3-phosphate + L-tryptophan + H2O. It functions in the pathway amino-acid biosynthesis; L-tryptophan biosynthesis; L-tryptophan from chorismate: step 5/5. In terms of biological role, the beta subunit is responsible for the synthesis of L-tryptophan from indole and L-serine. This Exiguobacterium sibiricum (strain DSM 17290 / CCUG 55495 / CIP 109462 / JCM 13490 / 255-15) protein is Tryptophan synthase beta chain.